The chain runs to 507 residues: Maturase K (507 aa).

The protein belongs to the intron maturase 2 family. MatK subfamily.

It localises to the plastid. The protein resides in the chloroplast. In terms of biological role, usually encoded in the trnK tRNA gene intron. Probably assists in splicing its own and other chloroplast group II introns. The chain is Maturase K from Annona muricata (Soursop).